A 363-amino-acid polypeptide reads, in one-letter code: Pyruvate dehydrogenase E1 component subunit alpha, mitochondrial (363 aa).

The N-terminal 2 residues, 1 to 2 (RN), are a transit peptide targeting the mitochondrion. K36 bears the N6-acetyllysine; alternate mark. K36 carries the N6-succinyllysine; alternate modification. The pyruvate site is built by H65, Y91, R92, A130, G138, V140, D169, G170, A171, N198, and Y200. Thiamine diphosphate-binding residues include Y91 and R92. Residues G138, V140, D169, G170, A171, and N198 each contribute to the thiamine diphosphate site. D169 provides a ligand contact to Mg(2+). Mg(2+) contacts are provided by N198 and Y200. A Phosphoserine; by PDK1 modification is found at S205. Position 217 is an N6-acetyllysine; alternate (K217). Position 217 is an N6-succinyllysine; alternate (K217). The residue at position 240 (K240) is an N6-acetyllysine. N6-succinyllysine is present on K250. H265 serves as a coordination point for thiamine diphosphate. A Phosphoserine; by PDK1, PDK2, PDK3 and PDK4 modification is found at S266. Position 268 is a phosphoserine (S268). Residue S273 is modified to Phosphoserine; by PDK1, PDK2, PDK3 and PDK4. Residue Y274 is modified to Phosphotyrosine. Residue K286 is modified to N6-acetyllysine; alternate. An N6-succinyllysine; alternate modification is found at K286. N6-acetyllysine occurs at positions 294 and 309. K358 carries the post-translational modification N6-succinyllysine.

As to quaternary structure, heterotetramer of two PDHA1 and two PDHB subunits. The heterotetramer interacts with DLAT, and is part of the multimeric pyruvate dehydrogenase complex that contains multiple copies of pyruvate dehydrogenase (E1), dihydrolipoamide acetyltransferase (DLAT, E2) and lipoamide dehydrogenase (DLD, E3). These subunits are bound to an inner core composed of about 48 DLAT and 12 PDHX molecules. Thiamine diphosphate serves as cofactor. Mg(2+) is required as a cofactor. Phosphorylation at Ser-205, Ser-266 and Ser-273 by PDK family kinases inactivates the enzyme; for this phosphorylation at a single site is sufficient. Phosphorylation at Ser-266 interferes with access to active site, and thereby inactivates the enzyme. Dephosphorylation at all three sites, i.e. at Ser-205, Ser-266 and Ser-273, is required for reactivation. In terms of processing, acetylation alters the phosphorylation pattern. Deacetylated by SIRT3.

It is found in the mitochondrion matrix. It catalyses the reaction N(6)-[(R)-lipoyl]-L-lysyl-[protein] + pyruvate + H(+) = N(6)-[(R)-S(8)-acetyldihydrolipoyl]-L-lysyl-[protein] + CO2. With respect to regulation, pyruvate dehydrogenase activity is inhibited by phosphorylation of PDHA1; it is reactivated by dephosphorylation. The pyruvate dehydrogenase complex catalyzes the overall conversion of pyruvate to acetyl-CoA and CO(2), and thereby links the glycolytic pathway to the tricarboxylic cycle. The chain is Pyruvate dehydrogenase E1 component subunit alpha, mitochondrial (PDHA) from Sminthopsis macroura (Stripe-faced dunnart).